Here is a 286-residue protein sequence, read N- to C-terminus: uncharacterized protein (286 aa).

Disordered regions lie at residues 1–38 (MSQK…EDDV), 108–146 (HTGE…RRHK), 196–227 (RTQK…KTRL), and 241–286 (DVDD…PRSS). Low complexity predominate over residues 18-29 (SSSKQVLSSTSS). Over residues 243 to 268 (DDQKKDGSGEEKKEKKSAEKEKKISH) the composition is skewed to basic and acidic residues. The span at 269-278 (ENVQSLSPSS) shows a compositional bias: polar residues.

This is an uncharacterized protein from Caenorhabditis elegans.